The chain runs to 435 residues: MSEIPIVSNHDLEKYVDRKVVIQGWVHGIRGSNARQFISLRNGGRILQVLAEKEILGEEVFQTVKHLRQETSVSVAGTLVKNEKSSVGFELIMDRIRIVGESENYPITPKEHGIDFLISQRHLWLRSSKQLAILRVRDNLSFAIRKYFHERDFLLIDTPILTGSVGESAGTLFSTEYFDLGNAYLAQTGQLYLEAAIFAHNKVFCYGPTFRAEKSKTRRHLTEFWMVEAEVAFAGHADNLKLQEDFVKTVIKETVQNSLQDLKVLERDPTPLLAYLEKDFPVIDYTKALEILKLKGEDIVWGDDINSEREQMLTMEFGGPIFIQKYPREAKAFYMKVNPDNPKTVLNADLIAPDGVGEIIGGSEREENYENIILRLEEEKLPVESYDWYLDLRKYGSVPHSGFGLGSERMIAWICGLQHVRECIPFPRMMERLYP.

The protein belongs to the class-II aminoacyl-tRNA synthetase family. Homodimer.

It is found in the cytoplasm. It catalyses the reaction tRNA(Asn) + L-asparagine + ATP = L-asparaginyl-tRNA(Asn) + AMP + diphosphate + H(+). This Leptospira borgpetersenii serovar Hardjo-bovis (strain JB197) protein is Asparagine--tRNA ligase.